An 80-amino-acid chain; its full sequence is Toxin Acra I-2 (80 aa).

An N-terminal signal peptide occupies residues 1 to 22 (MMKLALFSIIVILFSLIGSIHG). The region spanning 25–80 (VPGNYPLDSSGNKYPCTVLGDNQSCIDVCKKHGVKYGYCYSFKCWCEFLEDKNVSI) is the LCN-type CS-alpha/beta domain. Cystine bridges form between Cys40–Cys63, Cys49–Cys68, and Cys53–Cys70.

As to expression, expressed by the venom gland.

It is found in the secreted. Functionally, probable neurotoxin that inhibits ion channels. Is toxic to mice. Is about 2.8% of the total protein in the venom. The sequence is that of Toxin Acra I-2 from Androctonus crassicauda (Arabian fat-tailed scorpion).